Reading from the N-terminus, the 385-residue chain is 1-deoxy-D-xylulose 5-phosphate reductoisomerase 1 (385 aa).

Residues T11, G12, S13, I14, N39, and N122 each coordinate NADPH. K123 contributes to the 1-deoxy-D-xylulose 5-phosphate binding site. E124 provides a ligand contact to NADPH. A Mn(2+)-binding site is contributed by D148. S149, E150, S174, and H197 together coordinate 1-deoxy-D-xylulose 5-phosphate. E150 contacts Mn(2+). An NADPH-binding site is contributed by G203. 4 residues coordinate 1-deoxy-D-xylulose 5-phosphate: S210, N215, K216, and E219. E219 serves as a coordination point for Mn(2+).

It belongs to the DXR family. It depends on Mg(2+) as a cofactor. The cofactor is Mn(2+).

The enzyme catalyses 2-C-methyl-D-erythritol 4-phosphate + NADP(+) = 1-deoxy-D-xylulose 5-phosphate + NADPH + H(+). Its pathway is isoprenoid biosynthesis; isopentenyl diphosphate biosynthesis via DXP pathway; isopentenyl diphosphate from 1-deoxy-D-xylulose 5-phosphate: step 1/6. Functionally, catalyzes the NADPH-dependent rearrangement and reduction of 1-deoxy-D-xylulose-5-phosphate (DXP) to 2-C-methyl-D-erythritol 4-phosphate (MEP). This is 1-deoxy-D-xylulose 5-phosphate reductoisomerase 1 from Bacillus thuringiensis subsp. konkukian (strain 97-27).